Reading from the N-terminus, the 213-residue chain is Octanoyltransferase (213 aa).

The BPL/LPL catalytic domain occupies 32 to 207 (DHTPDEIWLV…KLLALLNNPP (176 aa)). Residues 71–78 (RGGQVTYH), 138–140 (SLG), and 151–153 (GLA) contribute to the substrate site. Catalysis depends on Cys169, which acts as the Acyl-thioester intermediate.

The protein belongs to the LipB family.

It localises to the cytoplasm. The catalysed reaction is octanoyl-[ACP] + L-lysyl-[protein] = N(6)-octanoyl-L-lysyl-[protein] + holo-[ACP] + H(+). It functions in the pathway protein modification; protein lipoylation via endogenous pathway; protein N(6)-(lipoyl)lysine from octanoyl-[acyl-carrier-protein]: step 1/2. Its function is as follows. Catalyzes the transfer of endogenously produced octanoic acid from octanoyl-acyl-carrier-protein onto the lipoyl domains of lipoate-dependent enzymes. Lipoyl-ACP can also act as a substrate although octanoyl-ACP is likely to be the physiological substrate. This Enterobacter sp. (strain 638) protein is Octanoyltransferase.